The following is a 617-amino-acid chain: ATP-dependent RNA helicase DBP1 (617 aa).

The interval 1-90 (MADLPQKVSN…TSANYNRGGS (90 aa)) is disordered. Positions 7-17 (KVSNLSINNKE) are enriched in polar residues. Over residues 38–58 (PSFERSTPKQEDKVTGGDFFR) the composition is skewed to basic and acidic residues. The segment covering 79–90 (GGTSANYNRGGS) has biased composition (polar residues). The Q motif motif lies at 154–182 (LDFSSPPLDELLMENIKLASFTKPTPVQK). The Helicase ATP-binding domain occupies 185-374 (IPIVTKGRDL…RDFLDNYIFL (190 aa)). 198–205 (AQTGSGKT) serves as a coordination point for ATP. Positions 318-321 (DEAD) match the DEAD box motif. A Helicase C-terminal domain is found at 385–545 (NITQRILYVD…EVPTFLSDLS (161 aa)). The tract at residues 542-617 (SDLSRQNSRG…GYGNSNASWW (76 aa)) is disordered. Residues 580-594 (FGSTRPRNTGTSNWG) show a composition bias toward polar residues.

Belongs to the DEAD box helicase family. DDX3/DED1 subfamily.

Its subcellular location is the cytoplasm. The catalysed reaction is ATP + H2O = ADP + phosphate + H(+). Functionally, ATP-binding RNA helicase involved in translation initiation. Remodels RNA in response to ADP and ATP concentrations by facilitating disruption, but also formation of RNA duplexes. Redundant to DED1, may be required in conditions in which DED1 expression is decreased. The protein is ATP-dependent RNA helicase DBP1 (DBP1) of Saccharomyces cerevisiae (strain YJM789) (Baker's yeast).